We begin with the raw amino-acid sequence, 360 residues long: MATILRRRSLGNPWEQFANWITSTDNRFYIGWFGVLMVPTLLSATICFVVAFIAAPPVDMDGIREPISGSLLYGNNIITGAVIPSSNAIGLHFYPIWEAASMDEWLYNGGPYQLVVFHFLIGIFAYLGREWEFSYRLGLRPWICVAYSAPVAAATAVFLIYPMGQGSFSDGMSLGISGTFNFMFIFQAEHNILNHPLHMFGVAGVFGGSLFAAMHGSLVTSSLIKATSYEESQNYGYKFGQEEETYNIVAAHGYFGRLIFQYASFTNSRSLHFFLAAWPVIGIWLTSLGICVMGFNLNGFNFNASITDNQGRTIYTWADIVNRANLGIEVMHERNAHNFPLDLAGTESAPVAFAAALGDG.

A run of 3 helical transmembrane segments spans residues tyrosine 29–isoleucine 46, histidine 118–phenylalanine 133, and tryptophan 142–alanine 156. Residue histidine 118 participates in chlorophyll a binding. Residue tyrosine 126 coordinates pheophytin a. 2 residues coordinate [CaMn4O5] cluster: aspartate 170 and glutamate 189. The helical transmembrane segment at leucine 197 to leucine 218 threads the bilayer. Histidine 198 serves as a coordination point for chlorophyll a. A quinone contacts are provided by residues histidine 215 and serine 264–phenylalanine 265. Histidine 215 contributes to the Fe cation binding site. Histidine 272 contacts Fe cation. A helical membrane pass occupies residues phenylalanine 274–leucine 288. Residues histidine 332, glutamate 333, aspartate 342, and alanine 344 each contribute to the [CaMn4O5] cluster site. A propeptide spanning residues glycine 345–glycine 360 is cleaved from the precursor.

It belongs to the reaction center PufL/M/PsbA/D family. As to quaternary structure, PSII is composed of 1 copy each of membrane proteins PsbA, PsbB, PsbC, PsbD, PsbE, PsbF, PsbH, PsbI, PsbJ, PsbK, PsbL, PsbM, PsbT, PsbX, Psb30/Ycf12, peripheral proteins PsbO, CyanoQ (PsbQ), PsbU, PsbV and a large number of cofactors. It forms dimeric complexes. The D1/D2 heterodimer binds P680, chlorophylls that are the primary electron donor of PSII, and subsequent electron acceptors. It shares a non-heme iron and each subunit binds pheophytin, quinone, additional chlorophylls, carotenoids and lipids. D1 provides most of the ligands for the Mn4-Ca-O5 cluster of the oxygen-evolving complex (OEC). There is also a Cl(-1) ion associated with D1 and D2, which is required for oxygen evolution. The PSII complex binds additional chlorophylls, carotenoids and specific lipids. serves as cofactor. Post-translationally, tyr-161 forms a radical intermediate that is referred to as redox-active TyrZ, YZ or Y-Z. In terms of processing, C-terminally processed by CtpA; processing is essential to allow assembly of the oxygen-evolving complex and thus photosynthetic growth.

Its subcellular location is the cell inner membrane. The catalysed reaction is 2 a plastoquinone + 4 hnu + 2 H2O = 2 a plastoquinol + O2. Photosystem II (PSII) is a light-driven water:plastoquinone oxidoreductase that uses light energy to abstract electrons from H(2)O, generating O(2) and a proton gradient subsequently used for ATP formation. It consists of a core antenna complex that captures photons, and an electron transfer chain that converts photonic excitation into a charge separation. The D1/D2 (PsbA/PsbD) reaction center heterodimer binds P680, the primary electron donor of PSII as well as several subsequent electron acceptors. The polypeptide is Photosystem II protein D1 2 (Gloeobacter violaceus (strain ATCC 29082 / PCC 7421)).